The following is a 197-amino-acid chain: uncharacterized protein (197 aa).

Disordered stretches follow at residues 1–30 (MSDD…PKVV) and 115–174 (PSLK…KQEL). The segment covering 21-30 (KPTSTTPKVV) has biased composition (low complexity). Residues 123–137 (KVDEDDDQIYEDKEE) are compositionally biased toward acidic residues. The segment covering 157–170 (KSNKKVAPKQKKKS) has biased composition (basic residues).

This is an uncharacterized protein from Dictyostelium discoideum (Social amoeba).